The sequence spans 624 residues: (-)-beta-phellandrene synthase 2, chloroplastic (624 aa).

Residues 1-47 constitute a chloroplast transit peptide; it reads MALVSVAPLVSMRRSLFSSPYELKSIDKTIPNLVMCRKRMLGRPSIR. Asp375, Asp379, and Asp527 together coordinate Mg(2+). The DDXXD motif motif lies at 375–379; sequence DDIYD.

Belongs to the terpene synthase family. Tpsd subfamily. Mg(2+) is required as a cofactor. The cofactor is Mn(2+).

The protein localises to the plastid. The protein resides in the chloroplast. The enzyme catalyses (2E)-geranyl diphosphate = (-)-beta-phellandrene + diphosphate. Its pathway is terpene metabolism; oleoresin biosynthesis. It functions in the pathway secondary metabolite biosynthesis; terpenoid biosynthesis. In terms of biological role, monoterpene synthase (TPS) involved in the biosynthesis of monoterpene natural products included in conifer oleoresin secretions and volatile emissions; these compounds contribute to biotic and abiotic stress defense against herbivores and pathogens. Catalyzes the conversion of (2E)-geranyl diphosphate (GPP) to (-)-beta-phellandrene. In Pinus contorta (Shore pine), this protein is (-)-beta-phellandrene synthase 2, chloroplastic.